We begin with the raw amino-acid sequence, 350 residues long: tRNA uridine(34) hydroxylase (350 aa).

The Rhodanese domain maps to 146–240; the sequence is DDPDAVFIDM…YARRAREQGL (95 aa). The active-site Cysteine persulfide intermediate is cysteine 200. Positions 319–328 are enriched in basic and acidic residues; the sequence is RRRRAGRENG. Residues 319 to 350 are disordered; that stretch reads RRRRAGRENGNKIFNKSRGRLNSKLSIPDPAE.

The protein belongs to the TrhO family.

It carries out the reaction uridine(34) in tRNA + AH2 + O2 = 5-hydroxyuridine(34) in tRNA + A + H2O. Its function is as follows. Catalyzes oxygen-dependent 5-hydroxyuridine (ho5U) modification at position 34 in tRNAs. The sequence is that of tRNA uridine(34) hydroxylase from Salmonella typhi.